Consider the following 124-residue polypeptide: Small ribosomal subunit protein uS12 (124 aa).

3-methylthioaspartic acid is present on Asp-89. The tract at residues Thr-104 to Glu-124 is disordered.

It belongs to the universal ribosomal protein uS12 family. Part of the 30S ribosomal subunit. Contacts proteins S8 and S17. May interact with IF1 in the 30S initiation complex.

Its function is as follows. With S4 and S5 plays an important role in translational accuracy. Functionally, interacts with and stabilizes bases of the 16S rRNA that are involved in tRNA selection in the A site and with the mRNA backbone. Located at the interface of the 30S and 50S subunits, it traverses the body of the 30S subunit contacting proteins on the other side and probably holding the rRNA structure together. The combined cluster of proteins S8, S12 and S17 appears to hold together the shoulder and platform of the 30S subunit. The sequence is that of Small ribosomal subunit protein uS12 from Parasynechococcus marenigrum (strain WH8102).